We begin with the raw amino-acid sequence, 464 residues long: Protein FAM90A20 (464 aa).

Disordered regions lie at residues 16–42 (RAQT…DPRL), 71–213 (ATLG…IPRP), 228–247 (PTHS…ASKT), 254–273 (VRTQ…CPSA), 309–389 (RLGP…HDGA), and 418–437 (EKPG…SEAP). Basic and acidic residues-rich tracts occupy residues 74–83 (GKKEGKENLK) and 97–114 (NKDK…DPQR). Residues 180–197 (LASLSPLRKASLSSSSSL) show a composition bias toward low complexity.

It belongs to the FAM90 family.

This is Protein FAM90A20 from Homo sapiens (Human).